The following is a 594-amino-acid chain: Aspartate--tRNA(Asp/Asn) ligase (594 aa).

E175 is a binding site for L-aspartate. Residues 199–202 (QQLK) form an aspartate region. R221 is a binding site for L-aspartate. Residues 221-223 (RDE) and Q230 each bind ATP. H450 lines the L-aspartate pocket. Residue E485 coordinates ATP. R492 serves as a coordination point for L-aspartate. Position 537–540 (537–540 (GIDR)) interacts with ATP.

The protein belongs to the class-II aminoacyl-tRNA synthetase family. Type 1 subfamily. Homodimer.

It is found in the cytoplasm. It catalyses the reaction tRNA(Asx) + L-aspartate + ATP = L-aspartyl-tRNA(Asx) + AMP + diphosphate. Functionally, aspartyl-tRNA synthetase with relaxed tRNA specificity since it is able to aspartylate not only its cognate tRNA(Asp) but also tRNA(Asn). Reaction proceeds in two steps: L-aspartate is first activated by ATP to form Asp-AMP and then transferred to the acceptor end of tRNA(Asp/Asn). The protein is Aspartate--tRNA(Asp/Asn) ligase of Herpetosiphon aurantiacus (strain ATCC 23779 / DSM 785 / 114-95).